Consider the following 403-residue polypeptide: D-galactonate dehydratase family member RspA (403 aa).

Asn-37 and His-122 together coordinate substrate. The active-site Proton donor/acceptor is Tyr-159. Asp-211 serves as a coordination point for Mg(2+). His-213 acts as the Proton donor/acceptor in catalysis. 2 residues coordinate Mg(2+): Glu-237 and Glu-263. 5 residues coordinate substrate: Glu-263, Arg-284, His-313, Asp-317, and Glu-340.

It belongs to the mandelate racemase/muconate lactonizing enzyme family. GalD subfamily. It depends on Mg(2+) as a cofactor.

The catalysed reaction is D-mannonate = 2-dehydro-3-deoxy-D-gluconate + H2O. It catalyses the reaction D-gluconate = 2-dehydro-3-deoxy-D-gluconate + H2O. Has low dehydratase activity with D-mannonate and D-gluconate, suggesting that these are not physiological substrates and that it has no significant role in the in vivo degradation of these compounds. Has no detectable activity with a panel of 70 other acid sugars (in vitro). This Halomonas elongata (strain ATCC 33173 / DSM 2581 / NBRC 15536 / NCIMB 2198 / 1H9) protein is D-galactonate dehydratase family member RspA (rspA).